An 829-amino-acid chain; its full sequence is Spindle-defective protein 2 (829 aa).

4 disordered regions span residues 1–29 (MNEDAPMDLVDDRFADQSIQDEPVDDGES), 41–104 (EDED…SNDI), 183–294 (KKDV…TTSD), and 326–471 (RKKR…NGHM). The segment covering 54 to 82 (FRLENRYKPSLHTPRELPTIREENREDVR) has biased composition (basic and acidic residues). Residues 83 to 93 (SNTSSRVNTRP) are compositionally biased toward polar residues. The span at 183–216 (KKDVTRKQENVRPGKMMPEKVNDENEPKSRRFSP) shows a compositional bias: basic and acidic residues. Composition is skewed to polar residues over residues 217-230 (ERNTFTTSPMNSTK) and 266-294 (PQRTSGTPKTYESRHPTNAYTPNSATTSD). A coiled-coil region spans residues 314–332 (VDINLLTALENARKKRDRP). Low complexity-rich tracts occupy residues 361–370 (SMTSIVSSST) and 384–408 (NSATSTDLTNSNTSNFTNNTSRVST). Polar residues-rich tracts occupy residues 409–439 (AKNDFSRSSRQRNGFSDSSVSTIIPNMNSMT) and 448–463 (SVSSVRTISRASSTMT).

Its subcellular location is the cytoplasm. It localises to the cytoskeleton. The protein resides in the microtubule organizing center. The protein localises to the centrosome. It is found in the centriole. In terms of biological role, required both for centrosome duplication and maturation. Required for pericentriolar material (PCM) recruitment. This chain is Spindle-defective protein 2, found in Caenorhabditis briggsae.